The chain runs to 548 residues: Beta-caryophyllene synthase (548 aa).

(2E,6E)-farnesyl diphosphate contacts are provided by Arg268, Asp305, Asp309, Arg446, and Asp449. Asp305 and Asp309 together coordinate Mg(2+). The DDXXD motif motif lies at 305–309 (DDIYD). Positions 449 and 457 each coordinate Mg(2+).

The protein belongs to the terpene synthase family. Requires Mg(2+) as cofactor.

The catalysed reaction is (2E,6E)-farnesyl diphosphate = (-)-(E)-beta-caryophyllene + diphosphate. The protein operates within secondary metabolite biosynthesis; terpenoid biosynthesis. Its function is as follows. Sesquiterpene synthase that catalyzes the formation of sesquiterpenes and sesquiterpenoid alcohols. Converts farnesyl diphosphate (FPP) to beta-caryophyllene. Can use geranyl diphosphate (GPP) to produce myrcene, limonene and camphene. The polypeptide is Beta-caryophyllene synthase (Lavandula angustifolia (Lavender)).